A 109-amino-acid polypeptide reads, in one-letter code: Large ribosomal subunit protein uL24 (109 aa).

It belongs to the universal ribosomal protein uL24 family. In terms of assembly, part of the 50S ribosomal subunit.

Its function is as follows. One of two assembly initiator proteins, it binds directly to the 5'-end of the 23S rRNA, where it nucleates assembly of the 50S subunit. In terms of biological role, one of the proteins that surrounds the polypeptide exit tunnel on the outside of the subunit. This is Large ribosomal subunit protein uL24 from Syntrophotalea carbinolica (strain DSM 2380 / NBRC 103641 / GraBd1) (Pelobacter carbinolicus).